The primary structure comprises 260 residues: Tetraspanin-14 (260 aa).

Residues 1-10 (MKSQSHKPWN) are Cytoplasmic-facing. A helical membrane pass occupies residues 11-31 (LVAGIFFPIITFFLSAPLVGH). At 32-54 (ALYLFCMRNDHVYYRDFQSTLPR) the chain is on the extracellular side. The chain crosses the membrane as a helical span at residues 55–75 (VQTLVSVSLLALFLLSNIGMF). At 76–80 (LRPRR) the chain is on the cytoplasmic side. The chain crosses the membrane as a helical span at residues 81–101 (LSYFLVIVFFIGFAYSGVYKM). At 102-260 (ESRRFSPTPM…FLSSLTSLFR (159 aa)) the chain is on the extracellular side. An N-linked (GlcNAc...) asparagine glycan is attached at N182.

The protein belongs to the tetraspanin (TM4SF) family.

Its subcellular location is the membrane. May be involved in the regulation of cell differentiation. In Arabidopsis thaliana (Mouse-ear cress), this protein is Tetraspanin-14 (TET14).